A 415-amino-acid chain; its full sequence is F-box/kelch-repeat protein At2g29600 (415 aa).

A disordered region spans residues 1-58 (MASISETSDDGSNGGDPNQKPEEPHKNPQEGKEEENQNEKPKEDDHQEEEVENVPQIP). Over residues 19 to 45 (QKPEEPHKNPQEGKEEENQNEKPKEDD) the composition is skewed to basic and acidic residues. In terms of domain architecture, F-box spans 56 to 103 (QIPPQMPLELIVSTIATLRRCHYPTLSLLSDSFRQVISSVDLFQTRSL). Kelch repeat units lie at residues 161–208 (KIYV…VIDG), 210–254 (IYVV…FNVH), 260–309 (KIYI…AVVP), and 311–355 (HLHV…KLMI).

In Arabidopsis thaliana (Mouse-ear cress), this protein is F-box/kelch-repeat protein At2g29600.